A 468-amino-acid chain; its full sequence is Proline--tRNA ligase (468 aa).

The protein belongs to the class-II aminoacyl-tRNA synthetase family. ProS type 3 subfamily. Homodimer.

Its subcellular location is the cytoplasm. It catalyses the reaction tRNA(Pro) + L-proline + ATP = L-prolyl-tRNA(Pro) + AMP + diphosphate. In terms of biological role, catalyzes the attachment of proline to tRNA(Pro) in a two-step reaction: proline is first activated by ATP to form Pro-AMP and then transferred to the acceptor end of tRNA(Pro). The chain is Proline--tRNA ligase from Frankia casuarinae (strain DSM 45818 / CECT 9043 / HFP020203 / CcI3).